A 456-amino-acid polypeptide reads, in one-letter code: Alcohol acyltransferase 16 (456 aa).

Residues His167 and Asp382 each act as proton acceptor in the active site.

It belongs to the plant acyltransferase family. As to expression, expressed in fruit.

The enzyme catalyses 3-(methylsulfanyl)propanoyl-CoA + butan-1-ol = butyl 3-(methylsulfanyl)propanoate + CoA. The catalysed reaction is ethanol + benzoyl-CoA = ethyl benzoate + CoA. It catalyses the reaction butan-1-ol + benzoyl-CoA = butyl benzoate + CoA. It carries out the reaction 2-(methylsulfanyl)acetyl-CoA + butan-1-ol = butyl 2-(methylsulfanyl)acetate + CoA. Its function is as follows. Involved in the biosynthesis of volatile esters which confer kiwifruit flavor. Alcohol acyl transferase that can use a wide range of alcohols as substrate to produce esters. Exhibits benzoyl-CoA:alcohol O-acyltransferase activity. The protein is Alcohol acyltransferase 16 of Actinidia chinensis var. chinensis (Chinese soft-hair kiwi).